Consider the following 266-residue polypeptide: Thymidylate synthase (266 aa).

DUMP is bound by residues arginine 21 and 127 to 128 (RR). Cysteine 147 functions as the Nucleophile in the catalytic mechanism. Residues 168-171 (RSAD), asparagine 179, and 209-211 (HIY) each bind dUMP. Aspartate 171 contributes to the (6R)-5,10-methylene-5,6,7,8-tetrahydrofolate binding site. Alanine 265 is a binding site for (6R)-5,10-methylene-5,6,7,8-tetrahydrofolate.

It belongs to the thymidylate synthase family. Bacterial-type ThyA subfamily. Homodimer.

It localises to the cytoplasm. The enzyme catalyses dUMP + (6R)-5,10-methylene-5,6,7,8-tetrahydrofolate = 7,8-dihydrofolate + dTMP. It participates in pyrimidine metabolism; dTTP biosynthesis. Functionally, catalyzes the reductive methylation of 2'-deoxyuridine-5'-monophosphate (dUMP) to 2'-deoxythymidine-5'-monophosphate (dTMP) while utilizing 5,10-methylenetetrahydrofolate (mTHF) as the methyl donor and reductant in the reaction, yielding dihydrofolate (DHF) as a by-product. This enzymatic reaction provides an intracellular de novo source of dTMP, an essential precursor for DNA biosynthesis. This Brachyspira hyodysenteriae (strain ATCC 49526 / WA1) protein is Thymidylate synthase.